The following is a 110-amino-acid chain: Large ribosomal subunit protein uL22 (110 aa).

Belongs to the universal ribosomal protein uL22 family. As to quaternary structure, part of the 50S ribosomal subunit.

Functionally, this protein binds specifically to 23S rRNA; its binding is stimulated by other ribosomal proteins, e.g. L4, L17, and L20. It is important during the early stages of 50S assembly. It makes multiple contacts with different domains of the 23S rRNA in the assembled 50S subunit and ribosome. In terms of biological role, the globular domain of the protein is located near the polypeptide exit tunnel on the outside of the subunit, while an extended beta-hairpin is found that lines the wall of the exit tunnel in the center of the 70S ribosome. This is Large ribosomal subunit protein uL22 from Vesicomyosocius okutanii subsp. Calyptogena okutanii (strain HA).